Reading from the N-terminus, the 416-residue chain is F-box/FBD/LRR-repeat protein At1g13570 (416 aa).

In terms of domain architecture, F-box spans 5-53; that stretch reads PDFISDLPQSIIENILTRLSIRDAIRTSVLSSKWRYKWSTLTDLVFDEK. 5 LRR repeats span residues 115-142, 164-189, 203-229, 238-263, and 294-321; these read VLKL…ELCH, QILV…SLSY, MYLY…SVSM, FEQS…VGYI, and CFED…KVSA. Positions 346–384 constitute an FBD domain; sequence LPSLESVKITDASGIRYELEFIRFLLGTSPVLETVTVSS.

In Arabidopsis thaliana (Mouse-ear cress), this protein is F-box/FBD/LRR-repeat protein At1g13570.